Consider the following 202-residue polypeptide: 3-isopropylmalate dehydratase small subunit (202 aa).

Belongs to the LeuD family. LeuD type 1 subfamily. In terms of assembly, heterodimer of LeuC and LeuD.

The catalysed reaction is (2R,3S)-3-isopropylmalate = (2S)-2-isopropylmalate. The protein operates within amino-acid biosynthesis; L-leucine biosynthesis; L-leucine from 3-methyl-2-oxobutanoate: step 2/4. In terms of biological role, catalyzes the isomerization between 2-isopropylmalate and 3-isopropylmalate, via the formation of 2-isopropylmaleate. The sequence is that of 3-isopropylmalate dehydratase small subunit from Novosphingobium aromaticivorans (strain ATCC 700278 / DSM 12444 / CCUG 56034 / CIP 105152 / NBRC 16084 / F199).